The sequence spans 307 residues: Ornithine carbamoyltransferase (307 aa).

Carbamoyl phosphate-binding positions include 53–56 (STRT), Q80, R104, and 131–134 (HPCQ). Residues N162, D220, and 224–225 (SM) each bind L-ornithine. Carbamoyl phosphate is bound by residues 260 to 261 (CL) and R288.

The protein belongs to the aspartate/ornithine carbamoyltransferase superfamily. OTCase family.

The protein resides in the cytoplasm. The catalysed reaction is carbamoyl phosphate + L-ornithine = L-citrulline + phosphate + H(+). It functions in the pathway amino-acid biosynthesis; L-arginine biosynthesis; L-arginine from L-ornithine and carbamoyl phosphate: step 1/3. Reversibly catalyzes the transfer of the carbamoyl group from carbamoyl phosphate (CP) to the N(epsilon) atom of ornithine (ORN) to produce L-citrulline. In Nitrosomonas europaea (strain ATCC 19718 / CIP 103999 / KCTC 2705 / NBRC 14298), this protein is Ornithine carbamoyltransferase.